Here is a 391-residue protein sequence, read N- to C-terminus: Carbamoyl phosphate synthase small chain (391 aa).

Positions 1–187 (MAGVKERAVL…PLPYAWPTLK (187 aa)) are CPSase. 3 residues coordinate L-glutamine: Ser-50, Gly-239, and Gly-241. The Glutamine amidotransferase type-1 domain occupies 191 to 376 (RIVVMDFGIK…LEEVEAFHGA (186 aa)). The active-site Nucleophile is Cys-266. Leu-267, Gln-270, Asn-308, Gly-310, and Tyr-311 together coordinate L-glutamine. Active-site residues include His-349 and Glu-351.

The protein belongs to the CarA family. In terms of assembly, composed of two chains; the small (or glutamine) chain promotes the hydrolysis of glutamine to ammonia, which is used by the large (or ammonia) chain to synthesize carbamoyl phosphate. Tetramer of heterodimers (alpha,beta)4.

It carries out the reaction hydrogencarbonate + L-glutamine + 2 ATP + H2O = carbamoyl phosphate + L-glutamate + 2 ADP + phosphate + 2 H(+). The enzyme catalyses L-glutamine + H2O = L-glutamate + NH4(+). It functions in the pathway amino-acid biosynthesis; L-arginine biosynthesis; carbamoyl phosphate from bicarbonate: step 1/1. It participates in pyrimidine metabolism; UMP biosynthesis via de novo pathway; (S)-dihydroorotate from bicarbonate: step 1/3. Small subunit of the glutamine-dependent carbamoyl phosphate synthetase (CPSase). CPSase catalyzes the formation of carbamoyl phosphate from the ammonia moiety of glutamine, carbonate, and phosphate donated by ATP, constituting the first step of 2 biosynthetic pathways, one leading to arginine and/or urea and the other to pyrimidine nucleotides. The small subunit (glutamine amidotransferase) binds and cleaves glutamine to supply the large subunit with the substrate ammonia. This is Carbamoyl phosphate synthase small chain from Thermus thermophilus (strain ATCC BAA-163 / DSM 7039 / HB27).